Here is a 267-residue protein sequence, read N- to C-terminus: Hydroxynaphthalene reductase-like protein Arp2 (267 aa).

Residues Ile25, Asn45, Asp71, and Asn98 each coordinate NADP(+). Catalysis depends on proton donor residues Ser147 and Ser148. The NADP(+) site is built by Tyr162, Lys166, Val195, and Thr197. Catalysis depends on Tyr162, which acts as the Proton acceptor. Residue Lys166 is the Lowers pKa of active site Tyr of the active site.

It belongs to the short-chain dehydrogenases/reductases (SDR) family.

Hydroxynaphthalene reductase-like protein; part of the Pks2 gene cluster that mediates the formation of infectious structures (appressoria), enabling these fungi to kill insects faster. The product of the Pks2 gene cluster is different from the one of Pks1 and has still not been identified. This Metarhizium acridum (strain CQMa 102) protein is Hydroxynaphthalene reductase-like protein Arp2.